The chain runs to 277 residues: Phosphate import ATP-binding protein PstB 1 (277 aa).

The 246-residue stretch at 27–272 folds into the ABC transporter domain; sequence LRVRDLAVSY…PSHELTAAYI (246 aa). 59-66 serves as a coordination point for ATP; that stretch reads GPSGCGKT.

The protein belongs to the ABC transporter superfamily. Phosphate importer (TC 3.A.1.7) family. In terms of assembly, the complex is composed of two ATP-binding proteins (PstB), two transmembrane proteins (PstC and PstA) and a solute-binding protein (PstS).

It localises to the cell inner membrane. The enzyme catalyses phosphate(out) + ATP + H2O = ADP + 2 phosphate(in) + H(+). Functionally, part of the ABC transporter complex PstSACB involved in phosphate import. Responsible for energy coupling to the transport system. The chain is Phosphate import ATP-binding protein PstB 1 from Nitrosococcus oceani (strain ATCC 19707 / BCRC 17464 / JCM 30415 / NCIMB 11848 / C-107).